The primary structure comprises 595 residues: Estrogen receptor (595 aa).

Residues methionine 1–tyrosine 184 form a modulating (transactivation AF-1); mediates interaction with MACROD1 region. A glycan (O-linked (GlcNAc) serine) is linked at serine 10. A required for interaction with NCOA1 region spans residues leucine 35–serine 47. The interval leucine 35–methionine 174 is interaction with DDX5; self-association. A phosphoserine; by CDK2 mark is found at serine 104 and serine 106. A Phosphoserine modification is found at serine 118. Residues phenylalanine 149–serine 173 form a disordered region. Residues serine 154–leucine 165 show a composition bias toward basic and acidic residues. The residue at position 167 (serine 167) is a Phosphoserine; by CK2. NR C4-type zinc fingers lie at residues cysteine 185–cysteine 205 and cysteine 221–cysteine 245. A DNA-binding region (nuclear receptor) is located at residues cysteine 185 to methionine 250. The interval cysteine 185–leucine 310 is mediates interaction with DNTTIP2. The interval methionine 251 to leucine 310 is hinge. A compositionally biased stretch (basic residues) spans lysine 257 to arginine 269. The interval lysine 257–arginine 287 is disordered. Residue arginine 260 is modified to Asymmetric dimethylarginine; by PRMT1. The segment at glycine 262 to valine 595 is interaction with AKAP13. The self-association stretch occupies residues methionine 264–valine 595. Residues threonine 311–histidine 547 form the NR LBD domain. Residues threonine 311–valine 595 are transactivation AF-2. 17beta-estradiol-binding residues include glutamate 353 and arginine 394. Cysteine 447 is lipidated: S-palmitoyl cysteine. A 17beta-estradiol-binding site is contributed by histidine 524. Tyrosine 537 bears the Phosphotyrosine; by Tyr-kinases mark. Threonine 571 carries an O-linked (GlcNAc) threonine glycan.

Belongs to the nuclear hormone receptor family. NR3 subfamily. As to quaternary structure, binds DNA as a homodimer. Can form a heterodimer with ESR2. Interacts with coactivator NCOA5. Interacts with PELP1, the interaction is enhanced by 17-beta-estradiol; the interaction increases ESR1 transcriptional activity. Interacts with NCOA7; the interaction is ligand-inducible. Interacts with AKAP13, CUEDC2, HEXIM1, KDM5A, MAP1S, SMARD1, and UBE1C. Interacts with MUC1; the interaction is stimulated by 7 beta-estradiol (E2) and enhances ESR1-mediated transcription. Interacts with DNTTIP2, and UIMC1. Interacts with KMT2D/MLL2. Interacts with ATAD2; the interaction is enhanced by estradiol. Interacts with KIF18A and LDB1. Interacts with RLIM (via its C-terminus). Interacts with MACROD1. Interacts with SH2D4A and PLCG. Interacts with SH2D4A; the interaction blocks binding to PLCG and inhibits estrogen-induced cell proliferation. Interacts with DYNLL1. Interacts with CCDC62; the interaction requires estradiol and appears to enhance the transcription of target genes. Interacts with NR2C1; the interaction prevents homodimerization of ESR1 and suppresses its transcriptional activity and cell growth. Interacts with DNAAF4. Interacts with PRMT2. Interacts with RBFOX2. Interacts with EP300; the interaction is estrogen-dependent and enhanced by CITED1. Interacts with CITED1; the interaction is estrogen-dependent. Interacts with FAM120B, FOXL2, PHB2 and SLC30A9. Interacts with coactivators NCOA3 and NCOA6. Interacts with STK3/MST2 only in the presence of SAV1 and vice-versa. Binds to CSNK1D. Interacts with NCOA2; NCOA2 can interact with ESR1 AF-1 and AF-2 domains simultaneously and mediate their transcriptional synergy. Interacts with DDX5. Interacts with NCOA1; the interaction seems to require a self-association of N-terminal and C-terminal regions. Interacts with ZNF366, DDX17, NFKB1, RELA, SP1 and SP3. Interacts with NRIP1. Interacts with GPER1; the interaction occurs in an estrogen-dependent manner. Interacts with CLOCK and the interaction is stimulated by estrogen. Interacts with TRIP4 (ufmylated); estrogen dependent. Interacts with LMTK3; the interaction phosphorylates ESR1 (in vitro) and protects it against proteasomal degradation. Interacts with CCAR2 (via N-terminus) in a ligand-independent manner. Interacts with ZFHX3. Interacts with SFR1 in a ligand-dependent and -independent manner. Interacts with DCAF13, LATS1 and DCAF1; regulates ESR1 ubiquitination and ubiquitin-mediated proteasomal degradation. Interacts (via DNA-binding domain) with POU4F2 (C-terminus); this interaction increases the estrogen receptor ESR1 transcriptional activity in a DNA- and ligand 17-beta-estradiol-independent manner. Interacts with ESRRB isoform 1. Interacts with UBE3A and WBP2. Interacts with GTF2B. Interacts with RBM39. In the absence of hormonal ligand, interacts with TACC1. Interacts with PI3KR1 or PI3KR2 and PTK2/FAK1. Interacts with SRC. Interacts with BAG1; the interaction is promoted in the absence of estradiol (17-beta-estradiol/E2). Interacts with and ubiquitinated by STUB1; the interaction is promoted in the absence of estradiol (17-beta-estradiol/E2). Interacts with NEDD8. Ubiquitinated; regulated by LATS1 via DCAF1 it leads to ESR1 proteasomal degradation. Deubiquitinated by OTUB1. Ubiquitinated by STUB1/CHIP; in the CA1 hippocampal region following loss of endogenous circulating estradiol (17-beta-estradiol/E2). Ubiquitinated by UBR5, leading to its degradation: UBR5 specifically recognizes and binds ligand-bound ESR1 when it is not associated with coactivators (NCOAs). In presence of NCOAs, the UBR5-degron is not accessible, preventing its ubiquitination and degradation. Post-translationally, phosphorylated by cyclin A/CDK2 and CK1. Phosphorylation probably enhances transcriptional activity. Dephosphorylation at Ser-118 by PPP5C inhibits its transactivation activity. Phosphorylated by LMTK3 (in vitro). In terms of processing, palmitoylated at Cys-447 by ZDHHC7 and ZDHHC21. Palmitoylation is required for plasma membrane targeting and for rapid intracellular signaling via ERK and AKT kinases and cAMP generation, but not for signaling mediated by the nuclear hormone receptor. Dimethylated by PRMT1 at Arg-260. The methylation may favor cytoplasmic localization. Demethylated by JMJD6 at Arg-260.

It is found in the nucleus. Its subcellular location is the cytoplasm. The protein localises to the golgi apparatus. It localises to the cell membrane. Functionally, nuclear hormone receptor. The steroid hormones and their receptors are involved in the regulation of eukaryotic gene expression and affect cellular proliferation and differentiation in target tissues. Ligand-dependent nuclear transactivation involves either direct homodimer binding to a palindromic estrogen response element (ERE) sequence or association with other DNA-binding transcription factors, such as AP-1/c-Jun, c-Fos, ATF-2, Sp1 and Sp3, to mediate ERE-independent signaling. Ligand binding induces a conformational change allowing subsequent or combinatorial association with multiprotein coactivator complexes through LXXLL motifs of their respective components. Mutual transrepression occurs between the estrogen receptor (ER) and NF-kappa-B in a cell-type specific manner. Decreases NF-kappa-B DNA-binding activity and inhibits NF-kappa-B-mediated transcription from the IL6 promoter and displace RELA/p65 and associated coregulators from the promoter. Recruited to the NF-kappa-B response element of the CCL2 and IL8 promoters and can displace CREBBP. Present with NF-kappa-B components RELA/p65 and NFKB1/p50 on ERE sequences. Can also act synergistically with NF-kappa-B to activate transcription involving respective recruitment adjacent response elements; the function involves CREBBP. Can activate the transcriptional activity of TFF1. Also mediates membrane-initiated estrogen signaling involving various kinase cascades. Essential for MTA1-mediated transcriptional regulation of BRCA1 and BCAS3. Maintains neuronal survival in response to ischemic reperfusion injury when in the presence of circulating estradiol (17-beta-estradiol/E2). In Felis catus (Cat), this protein is Estrogen receptor (ESR1).